Consider the following 205-residue polypeptide: NADH dehydrogenase (205 aa).

FMN-binding positions include 17-21 (RRSIR), Gln-73, 158-159 (LG), and Arg-195.

It belongs to the nitroreductase family. In terms of assembly, homodimer. FMN serves as cofactor.

It carries out the reaction a ubiquinone + NADH + 5 H(+)(in) = a ubiquinol + NAD(+) + 4 H(+)(out). Functionally, can oxidize either NADH or NADPH with a preference for NADH. Can catalyze electron transfer from NADH to various electron acceptors which include, in addition to molecular oxygen, cytochrome c, 2,6 dichlorphenolindophenol, methylene blue, ferricyanide or P-nitroblue tetrazolium. This chain is NADH dehydrogenase (nox), found in Thermus thermophilus (strain ATCC 27634 / DSM 579 / HB8).